A 699-amino-acid chain; its full sequence is Auxin response factor 10 (699 aa).

3 disordered regions span residues Ala108 to Asn136, Thr505 to Lys533, and Lys551 to Leu595. The segment covering Glu110–Arg119 has biased composition (basic and acidic residues). Polar residues predominate over residues Phe125–Asn135. Positions Phe125–Lys227 form a DNA-binding region, TF-B3. Polar residues predominate over residues Pro570–Trp593. The PB1 domain maps to Pro613–Gly693.

Belongs to the ARF family. As to quaternary structure, homodimers and heterodimers.

The protein localises to the nucleus. Its function is as follows. Auxin response factors (ARFs) are transcriptional factors that bind specifically to the DNA sequence 5'-TGTCTC-3' found in the auxin-responsive promoter elements (AuxREs). This Oryza sativa subsp. indica (Rice) protein is Auxin response factor 10 (ARF10).